The sequence spans 494 residues: Maintenance of mitochondrial morphology protein 1 (494 aa).

Topologically, residues 1–22 are lumenal; that stretch reads MSSQPGDPATLPAQSSLSFTQG. Residues 23–43 traverse the membrane as a helical segment; that stretch reads FLLGQLSVVLVLAAFIKFFIF. The Cytoplasmic segment spans residues 44 to 494; that stretch reads GEAPPPPSRG…GSLPEAVTPG (451 aa). 4 disordered regions span residues 50-98, 274-330, 398-426, and 449-494; these read PSRG…SSST, PPLD…KSNV, VRTGDDAETASNGPRSTVSADIGGSARHE, and VASR…VTPG. Basic residues predominate over residues 54–64; sequence LSHRSATHRRS. 2 stretches are compositionally biased toward polar residues: residues 65 to 76 and 85 to 98; these read NSIYSNSPQEAG and STSNVLRPVPSSST. The region spanning 130–387 is the SMP-LTD domain; it reads QPESLDWFNV…EPRVQVVGLP (258 aa). A compositionally biased stretch (pro residues) spans 274-286; that stretch reads PPLDTPSHSPSPP. Polar residues-rich tracts occupy residues 406–416 and 466–477; these read TASNGPRSTVS and RSMTRQESSGDL.

It belongs to the MMM1 family. As to quaternary structure, homodimer. Component of the ER-mitochondria encounter structure (ERMES) or MDM complex, composed of mmm1, mdm10, mdm12 and mdm34. A mmm1 homodimer associates with one molecule of mdm12 on each side in a pairwise head-to-tail manner, and the SMP-LTD domains of mmm1 and mdm12 generate a continuous hydrophobic tunnel for phospholipid trafficking.

Its subcellular location is the endoplasmic reticulum membrane. Functionally, component of the ERMES/MDM complex, which serves as a molecular tether to connect the endoplasmic reticulum (ER) and mitochondria. Components of this complex are involved in the control of mitochondrial shape and protein biogenesis, and function in nonvesicular lipid trafficking between the ER and mitochondria. The mdm12-mmm1 subcomplex functions in the major beta-barrel assembly pathway that is responsible for biogenesis of all outer membrane beta-barrel proteins, and acts in a late step after the SAM complex. The mdm10-mdm12-mmm1 subcomplex further acts in the TOM40-specific pathway after the action of the mdm12-mmm1 complex. Essential for establishing and maintaining the structure of mitochondria and maintenance of mtDNA nucleoids. This Aspergillus clavatus (strain ATCC 1007 / CBS 513.65 / DSM 816 / NCTC 3887 / NRRL 1 / QM 1276 / 107) protein is Maintenance of mitochondrial morphology protein 1.